Consider the following 347-residue polypeptide: Protein POOR HOMOLOGOUS SYNAPSIS 1 (347 aa).

Its subcellular location is the cytoplasm. In terms of biological role, required for accurate chromosome segregation in meiosis. Required for pairing to occur between homologous chromosomes. Acts in early recombination steps and ensures pairing fidelity and proper repair of meiotic DNA double-strand-breaks. Regulates recombination and pairing of homologous chromosomes during meiotic prophase by controlling transport of RAD50 from cytoplasm to the nucleus. May affect pairing of the gene-rich fraction of the genome rather than preventing pairing between repetitive DNA elements. The sequence is that of Protein POOR HOMOLOGOUS SYNAPSIS 1 from Zea mays (Maize).